An 822-amino-acid polypeptide reads, in one-letter code: Probable phosphoketolase (822 aa).

This sequence belongs to the XFP family. Requires thiamine diphosphate as cofactor.

The chain is Probable phosphoketolase from Nocardia farcinica (strain IFM 10152).